Consider the following 36-residue polypeptide: U1-ectatotoxin-Et1b subunit B (36 aa).

An intrachain disulfide couples Cys-11 to Cys-33.

The protein belongs to the ectatomin family. Ectatomin-Et subfamily. As to quaternary structure, heterodimer of subunits A and B; disulfide-linked. In terms of tissue distribution, expressed by the venom gland.

It localises to the secreted. The protein localises to the target cell membrane. The chain is U1-ectatotoxin-Et1b subunit B from Ectatomma tuberculatum (Selva ant).